The chain runs to 1782 residues: A-kinase anchor protein 12 (1782 aa).

8 disordered regions span residues 1–53, 71–169, 189–400, 421–886, 938–1089, 1105–1134, 1157–1274, and 1305–1355; these read MGAG…DPAT, QDEL…QAND, KTEK…APLA, VSTV…ELSE, EREV…LKKE, PFTQ…ESSE, AIPP…ADEK, and KGEG…HVNE. Residue Gly-2 is the site of N-myristoyl glycine attachment. Phosphoserine is present on residues Ser-11, Ser-19, Ser-28, Ser-75, and Ser-96. Low complexity predominate over residues 16 to 53; it reads PEGSSTPAEPEPSGGGPSAEAAPDTTADPAIAASDPAT. A compositionally biased stretch (basic and acidic residues) spans 108–125; it reads GQRDSEDVSKRDSDKEMA. Residues 145–154 are compositionally biased toward low complexity; it reads IIEQIPSSES. The residue at position 154 (Ser-154) is a Phosphoserine. Residues 157 to 168 show a composition bias toward polar residues; it reads EELTQPTESQAN. 8 positions are modified to phosphoserine: Ser-219, Ser-248, Ser-258, Ser-280, Ser-283, Ser-286, Ser-347, and Ser-371. The segment covering 226–249 has biased composition (basic and acidic residues); the sequence is ASKESEPKQSTEKPEETLKREQSH. Residues 266 to 557 form an involved in PKC-binding region; it reads KEEGEEKQEK…TQVPADSPDS (292 aa). 2 stretches are compositionally biased toward basic and acidic residues: residues 315 to 347 and 363 to 379; these read KPKE…EVAS and ESAH…KVEL. Tyr-374 carries the phosphotyrosine modification. A phosphoserine mark is found at Ser-381 and Ser-392. The span at 423-435 shows a compositional bias: basic and acidic residues; the sequence is TVEERTEEQKTEV. Over residues 446 to 456 the composition is skewed to acidic residues; sequence ELVEMDAEPQE. Basic and acidic residues predominate over residues 458-468; it reads EPAKELVKLKE. Ser-483 and Ser-505 each carry phosphoserine. A compositionally biased stretch (basic residues) spans 528–537; sequence LSGKKQKGKR. Phosphoserine is present on residues Ser-554, Ser-557, Ser-598, Ser-612, Ser-627, and Ser-629. Residues 607–627 carry the AKAP CaM-binding 1 motif; it reads VTPWASFKKMVTPKKRVRRPS. The segment covering 625 to 639 has biased composition (basic and acidic residues); the sequence is RPSESDKEDELDKVK. Residues 640–652 show a composition bias toward low complexity; sequence SATLSSTESTASE. Thr-642 is modified (phosphothreonine). Residues Ser-644, Ser-645, Ser-648, and Ser-651 each carry the phosphoserine modification. The span at 655-674 shows a compositional bias: basic and acidic residues; sequence EEMKGSVEEPKPEEPKRKVD. 3 positions are modified to phosphoserine: Ser-696, Ser-697, and Ser-698. The segment covering 708–724 has biased composition (basic and acidic residues); it reads GGDHQKADEAGKDKETG. The segment covering 739–749 has biased composition (polar residues); the sequence is QGSSSPEQAGS. Ser-749, Ser-761, and Ser-787 each carry phosphoserine. The AKAP CaM-binding 2 signature appears at 756–776; that stretch reads VSTWESFKRLVTPRKKSKSKL. A compositionally biased stretch (basic and acidic residues) spans 792-803; the sequence is STPDTEPGKEES. Residues 801 to 821 carry the AKAP CaM-binding 3 motif; sequence EESWVSIKKFIPGRRKKRPDG. The residue at position 806 (Ser-806) is a Phosphoserine. The segment covering 986–997 has biased composition (low complexity); it reads GAEEGTEASAAE. Lys-1051 is covalently cross-linked (Glycyl lysine isopeptide (Lys-Gly) (interchain with G-Cter in SUMO1)). A compositionally biased stretch (basic and acidic residues) spans 1072–1089; that stretch reads AEAERPEEQAEASGLKKE. Positions 1164 to 1174 are enriched in polar residues; sequence ETPTDSETDGS. Basic and acidic residues-rich tracts occupy residues 1187-1198 and 1231-1251; these read QKDEIVEIHEEN and EETK…KEVS. The span at 1253–1267 shows a compositional bias: polar residues; sequence ETVSILSKTEGTQEA. Residues Ser-1328 and Ser-1331 each carry the phosphoserine modification. A compositionally biased stretch (basic and acidic residues) spans 1333–1355; sequence VEREMVVQVEREKTEAEPTHVNE. Ser-1391 and Ser-1395 each carry phosphoserine. The segment at 1541-1554 is RII-binding; that stretch reads ELETKSSKLVQNII. The segment at 1584–1782 is disordered; the sequence is KADSQDAGQE…ESAKSELTES (199 aa). At Ser-1587 the chain carries Phosphoserine. The span at 1603 to 1612 shows a compositional bias: polar residues; it reads ASAQDETPIT. 2 stretches are compositionally biased toward basic and acidic residues: residues 1629–1639 and 1675–1699; these read DISKDMSEASE and VPED…KEDE. Phosphoserine is present on Ser-1727. Composition is skewed to basic and acidic residues over residues 1734 to 1757 and 1766 to 1782; these read KQKE…ESDK and ELQK…LTES.

In terms of assembly, binds to dimeric RII-alpha regulatory subunit of PKC. Expressed in endothelial cells, cultured fibroblasts and osteosarcoma, but not in platelets, leukocytes, monocytic cell lines or peripherical blood cells.

It is found in the cytoplasm. The protein localises to the cell cortex. It localises to the cytoskeleton. Its subcellular location is the membrane. Functionally, anchoring protein that mediates the subcellular compartmentation of protein kinase A (PKA) and protein kinase C (PKC). This chain is A-kinase anchor protein 12 (AKAP12), found in Homo sapiens (Human).